Reading from the N-terminus, the 419-residue chain is L-rhamnose isomerase (419 aa).

Residues His-262, Asp-294, and Asp-296 each contribute to the Mn(2+) site.

This sequence belongs to the rhamnose isomerase family. Homotetramer. Mn(2+) serves as cofactor.

The protein localises to the cytoplasm. It carries out the reaction L-rhamnopyranose = L-rhamnulose. Its pathway is carbohydrate degradation; L-rhamnose degradation; glycerone phosphate from L-rhamnose: step 1/3. Catalyzes the interconversion of L-rhamnose and L-rhamnulose. This is L-rhamnose isomerase from Escherichia coli O45:K1 (strain S88 / ExPEC).